The primary structure comprises 114 residues: Ghrelin (114 aa).

An N-terminal signal peptide occupies residues Met1–Ala24. The O-decanoyl threonine; alternate moiety is linked to residue Thr27. Thr27 carries O-octanoyl threonine; alternate lipidation. Residues Gly55–Gln114 constitute a propeptide, removed in mature form.

This sequence belongs to the motilin family. In terms of processing, O-octanoylated by GOAT/MBOAT4. O-octanoylation or O-decanoylation is essential for activity. The O-decanoylated form ghrelin-27-C10 differs in the length of the carbon backbone of the carboxylic acid bound to Thr-27. 33% of frog ghrelin is O-decanoylated. Post-translationally, 80% of frog ghrelin has Asn-52 cleaved from its C-terminus giving rise to ghrelin-27. As to expression, high levels in stomach. Moderate levels in small intestine, pancreas and testis. Low levels in heart, lung and gall bladder.

The protein localises to the secreted. Functionally, ligand for growth hormone secretagogue receptor type 1 (GHSR). Induces the release of growth hormone from the pituitary. Has an appetite-stimulating effect, induces adiposity and stimulates gastric acid secretion. Involved in growth regulation. The sequence is that of Ghrelin (GHRL) from Aquarana catesbeiana (American bullfrog).